Here is a 419-residue protein sequence, read N- to C-terminus: MEKEMRNLMLLVLLTVILDNGIGKCNAKSEEDQDGNARNNRIDKNDDNSDSIEKYLREVTDELSKILAKRIYRDIQLRENNKKAENRQSWIGDLENLDIDSTVQRPPGLWGREADFDNTRAHDSAQISDEKQSGLWVGDAKPPGLWGRDAKPPGLWGRDAKPPGLWGRDAKPPGLWGRDAKPPGLWGRDAKPPGLWGRDAKPPGLWGRDAKPPGLWGGDAKPPGLWGRDAKPPGLWGRDAKPPGLWGRDAKPPGLWGRDAKPPGLWGRDAKPPGLWGRDTKPPGLWGRDAKPPGLWGRDAKPPSLWSKDNNVIKSRSDDAKPPGLWGRQVEDGPTKIWGDGFLDAERHIRLLKNDERFNRLEKKADMEEELRVAQGPSVTNAKDTFGELADLLRKRIVKRLHKNDSLNNRRNNKKNNKF.

The signal sequence occupies residues 1 to 27 (MEKEMRNLMLLVLLTVILDNGIGKCNA). A disordered region spans residues 27–48 (AKSEEDQDGNARNNRIDKNDDN). The propeptide occupies 28 to 104 (KSEEDQDGNA…ENLDIDSTVQ (77 aa)). Position 110 is a tryptophan amide (tryptophan 110). Residues 113–140 (EADFDNTRAHDSAQISDEKQSGLWVGDA) constitute a propeptide that is removed on maturation. Residues 120–132 (RAHDSAQISDEKQ) show a composition bias toward basic and acidic residues. The interval 120-332 (RAHDSAQISD…PGLWGRQVED (213 aa)) is disordered. At tryptophan 146 the chain carries Tryptophan amide. A propeptide spanning residues 149–150 (DA) is cleaved from the precursor. Residue tryptophan 156 is modified to Tryptophan amide. Residues 159 to 160 (DA) constitute a propeptide that is removed on maturation. Residue tryptophan 166 is modified to Tryptophan amide. Positions 169 to 170 (DA) are excised as a propeptide. At tryptophan 176 the chain carries Tryptophan amide. The propeptide occupies 179 to 180 (DA). At tryptophan 186 the chain carries Tryptophan amide. The propeptide occupies 189–190 (DA). Tryptophan 196 carries the tryptophan amide modification. Positions 199–200 (DA) are excised as a propeptide. A Tryptophan amide modification is found at tryptophan 206. Positions 209-210 (DA) are excised as a propeptide. Tryptophan 216 carries the post-translational modification Tryptophan amide. Residues 218 to 220 (GDA) constitute a propeptide, seems to have a sequencing error or a mutation in position 218; Gly instead of Arg. Tryptophan 226 carries the tryptophan amide modification. Residues 229–230 (DA) constitute a propeptide that is removed on maturation. Tryptophan 236 is subject to Tryptophan amide. Residues 239-240 (DA) constitute a propeptide that is removed on maturation. The residue at position 246 (tryptophan 246) is a Tryptophan amide. Residues 249–250 (DA) constitute a propeptide that is removed on maturation. At tryptophan 256 the chain carries Tryptophan amide. Positions 259-260 (DA) are excised as a propeptide. Tryptophan amide is present on tryptophan 266. Positions 269 to 270 (DA) are excised as a propeptide. Tryptophan 276 is modified (tryptophan amide). A propeptide spanning residues 279–280 (DT) is cleaved from the precursor. Tryptophan 286 carries the post-translational modification Tryptophan amide. The propeptide occupies 289–290 (DA). Tryptophan 296 carries the post-translational modification Tryptophan amide. Propeptides lie at residues 299–300 (DA) and 309–320 (DNNVIKSRSDDA). Tryptophan 326 bears the Tryptophan amide mark. Positions 329 to 419 (QVEDGPTKIW…RRNNKKNNKF (91 aa)) are excised as a propeptide.

Belongs to the LWamide neuropeptide family. In terms of tissue distribution, in planula larvae, expressed in a narrow ring of ectodermal neurosensory cells around the widest circumference at the anterior of the larvae. In primary polyps, expression is confined to endodermal cells of the hypostome. In mature polyps, expression is strong in the epidermis from the tentacle level to the base of the polyp and weak in the gastrodermal cells in the apical hypostome.

The protein localises to the secreted. Its function is as follows. LWamide peptides may be involved in induction of metamorphosis. This Hydractinia echinata (Snail fur) protein is LWamide neuropeptides.